A 301-amino-acid chain; its full sequence is Probable alpha-L-glutamate ligase (301 aa).

The region spanning 104–287 is the ATP-grasp domain; sequence MQLLSRKGIG…VAGLIVDFIE (184 aa). Residues Lys141, 178–179, Asp187, and 211–213 contribute to the ATP site; these read EF and RSN. Mg(2+)-binding residues include Asp248, Glu260, and Asn262. Mn(2+)-binding residues include Asp248, Glu260, and Asn262.

The protein belongs to the RimK family. Requires Mg(2+) as cofactor. The cofactor is Mn(2+).

The protein is Probable alpha-L-glutamate ligase of Aliivibrio salmonicida (strain LFI1238) (Vibrio salmonicida (strain LFI1238)).